The primary structure comprises 335 residues: Glutaredoxin-3 (335 aa).

Ala2 bears the N-acetylalanine mark. The 116-residue stretch at 2 to 117 (AAGAAEAAVA…LTKKVQRHAS (116 aa)) folds into the Thioredoxin domain. Residues Ser117 and Ser120 each carry the phosphoserine modification. Glutaredoxin domains lie at 144 to 236 (APCM…PKLE) and 237 to 335 (ERLK…RGEN). The [2Fe-2S] cluster site is built by Cys159 and Cys261.

In terms of assembly, homodimer; the homodimer is independent of 2Fe-2S clusters. Heterotrimer; forms a heterotrimeric complex composed by two BOLA2 molecules and one GLRX3 molecule; linked by [2Fe-2S] clusters. Interacts (via N-terminus) with PRKCQ/PKC-theta. Interacts (via C-terminus) with CSRP3. Interacts with CSRP2. In terms of tissue distribution, expressed in heart, spleen, testis and, to a lower extent, in thymus and peripheral blood leukocytes. Weakly expressed in lung, placenta, colon and small intestine.

Its subcellular location is the cytoplasm. It is found in the cytosol. The protein localises to the cell cortex. It localises to the myofibril. The protein resides in the sarcomere. Its subcellular location is the z line. In terms of biological role, together with BOLA2, acts as a cytosolic iron-sulfur (Fe-S) cluster assembly factor that facilitates [2Fe-2S] cluster insertion into a subset of cytosolic proteins. Acts as a critical negative regulator of cardiac hypertrophy and a positive inotropic regulator. Required for hemoglobin maturation. Does not possess any thyoredoxin activity since it lacks the conserved motif that is essential for catalytic activity. The polypeptide is Glutaredoxin-3 (GLRX3) (Homo sapiens (Human)).